The primary structure comprises 500 residues: Probable malate:quinone oxidoreductase (500 aa).

This sequence belongs to the MQO family. FAD serves as cofactor.

The catalysed reaction is (S)-malate + a quinone = a quinol + oxaloacetate. It participates in carbohydrate metabolism; tricarboxylic acid cycle; oxaloacetate from (S)-malate (quinone route): step 1/1. This is Probable malate:quinone oxidoreductase from Corynebacterium aurimucosum (strain ATCC 700975 / DSM 44827 / CIP 107346 / CN-1) (Corynebacterium nigricans).